The primary structure comprises 305 residues: Leucine-rich repeat-containing protein 25 (305 aa).

The first 20 residues, M1–S20, serve as a signal peptide directing secretion. At L21–T165 the chain is on the extracellular side. LRR repeat units follow at residues S39–R59, N62–H83, and K86–R107. Residues N44 and N55 are each glycosylated (N-linked (GlcNAc...) asparagine). Residues N130 and N148 are each glycosylated (N-linked (GlcNAc...) asparagine). The chain crosses the membrane as a helical span at residues I166–L186. Over A187–H305 the chain is Cytoplasmic. The disordered stretch occupies residues P204–P229. The residue at position 284 (Y284) is a Phosphotyrosine.

As to quaternary structure, interacts with RIGI. Interacts with SQSTM1. Interacts with p65/RELA; this interaction promotes the degradation of RELA through autophagy. In terms of tissue distribution, expressed in plasmacytoid dendritic cells (PDC), monocyte-derived dendritic cells (MDDC), granulocytes, monocytes, B-lymphocytes, peripheral blood leukocytes, spleen, bone marrow, and, to a lesser extent, lymph nodes, fetal liver, and appendix but not in thymus.

It localises to the membrane. The protein resides in the cytoplasm. In terms of biological role, plays a role in the inhibition of RLR-mediated type I interferon signaling pathway by targeting RIGI for autophagic degradation. Interacts specifically with ISG15-associated RIGI to promote interaction between RIGI and the autophagic cargo receptor p62/SQSTM1 to mediate RIGI degradation via selective autophagy. Also plays a role in the inhibition of NF-kappa-B signaling pathway and inflammatory response by promoting the degradation of p65/RELA. This chain is Leucine-rich repeat-containing protein 25 (LRRC25), found in Homo sapiens (Human).